The sequence spans 226 residues: uncharacterized protein (226 aa).

Disordered stretches follow at residues Met1–Thr20 and Leu205–Ala226.

This is an uncharacterized protein from Treponema pallidum (strain Nichols).